The primary structure comprises 51 residues: Large ribosomal subunit protein bL33 (51 aa).

This sequence belongs to the bacterial ribosomal protein bL33 family.

The polypeptide is Large ribosomal subunit protein bL33 (Acinetobacter baylyi (strain ATCC 33305 / BD413 / ADP1)).